The sequence spans 691 residues: Elongation factor G (691 aa).

In terms of domain architecture, tr-type G spans Glu-8–Ile-282. GTP-binding positions include Ala-17 to Thr-24, Asp-81 to His-85, and Asn-135 to Asp-138.

The protein belongs to the TRAFAC class translation factor GTPase superfamily. Classic translation factor GTPase family. EF-G/EF-2 subfamily.

The protein resides in the cytoplasm. Functionally, catalyzes the GTP-dependent ribosomal translocation step during translation elongation. During this step, the ribosome changes from the pre-translocational (PRE) to the post-translocational (POST) state as the newly formed A-site-bound peptidyl-tRNA and P-site-bound deacylated tRNA move to the P and E sites, respectively. Catalyzes the coordinated movement of the two tRNA molecules, the mRNA and conformational changes in the ribosome. This chain is Elongation factor G, found in Synechococcus sp. (strain WH7803).